The sequence spans 557 residues: Formate--tetrahydrofolate ligase (557 aa).

ATP is bound at residue 65 to 72 (TPAGEGKT).

This sequence belongs to the formate--tetrahydrofolate ligase family.

The catalysed reaction is (6S)-5,6,7,8-tetrahydrofolate + formate + ATP = (6R)-10-formyltetrahydrofolate + ADP + phosphate. It participates in one-carbon metabolism; tetrahydrofolate interconversion. This chain is Formate--tetrahydrofolate ligase, found in Methylorubrum extorquens (strain CM4 / NCIMB 13688) (Methylobacterium extorquens).